Here is a 236-residue protein sequence, read N- to C-terminus: Activating transcription factor of chaperone (236 aa).

Residues 117-185 (HRASQLASPQ…KNAATRYRQK (69 aa)) form a disordered region. Over residues 120–137 (SQLASPQHSSSSANASPR) the composition is skewed to low complexity. Over residues 162-175 (RPVDDRRSRKKEQN) the composition is skewed to basic and acidic residues. One can recognise a bZIP domain in the interval 165–228 (DDRRSRKKEQ…RYLKALMRDL (64 aa)). The segment at 167–187 (RRSRKKEQNKNAATRYRQKKK) is basic motif. The leucine-zipper stretch occupies residues 193-228 (LLKEEQTLRQRHTELGEKCSDLQREIRYLKALMRDL).

It belongs to the bZIP family. In terms of assembly, binds DNA as a dimer.

It is found in the nucleus. In terms of biological role, transcriptional activator that acts in the unfolded protein response (UPR) pathway. Acts during endoplasmic reticulum (ER) stress by activating UPR target genes via direct binding to the UPR element (UPRE) (5'-GGAACTGGACAGCGTGTCGAAA-3'). Activates expression of ER chaperones ERP72 and PDI. The polypeptide is Activating transcription factor of chaperone (Bombyx mori (Silk moth)).